We begin with the raw amino-acid sequence, 367 residues long: Aminomethyltransferase (367 aa).

It belongs to the GcvT family. As to quaternary structure, the glycine cleavage system is composed of four proteins: P, T, L and H.

The enzyme catalyses N(6)-[(R)-S(8)-aminomethyldihydrolipoyl]-L-lysyl-[protein] + (6S)-5,6,7,8-tetrahydrofolate = N(6)-[(R)-dihydrolipoyl]-L-lysyl-[protein] + (6R)-5,10-methylene-5,6,7,8-tetrahydrofolate + NH4(+). Its function is as follows. The glycine cleavage system catalyzes the degradation of glycine. This Mycolicibacterium paratuberculosis (strain ATCC BAA-968 / K-10) (Mycobacterium paratuberculosis) protein is Aminomethyltransferase.